A 525-amino-acid chain; its full sequence is D-arabinono-1,4-lactone oxidase (525 aa).

One can recognise an FAD-binding PCMH-type domain in the interval 23-197; it reads YSCRPQLYFQ…VKATIRVIPE (175 aa). His-60 carries the pros-8alpha-FAD histidine modification.

This sequence belongs to the oxygen-dependent FAD-linked oxidoreductase family. FAD is required as a cofactor.

It localises to the mitochondrion membrane. The enzyme catalyses D-arabinono-1,4-lactone + O2 = dehydro-D-arabinono-1,4-lactone + H2O2 + H(+). Its pathway is cofactor biosynthesis; D-erythroascorbate biosynthesis; dehydro-D-arabinono-1,4-lactone from D-arabinose: step 2/2. The sequence is that of D-arabinono-1,4-lactone oxidase (ALO1) from Kluyveromyces lactis (strain ATCC 8585 / CBS 2359 / DSM 70799 / NBRC 1267 / NRRL Y-1140 / WM37) (Yeast).